Reading from the N-terminus, the 182-residue chain is tRNA-splicing endonuclease (182 aa).

Residues tyrosine 119, histidine 127, and lysine 158 contribute to the active site.

It belongs to the tRNA-intron endonuclease family. Archaeal short subfamily. In terms of assembly, homotetramer; although the tetramer contains four active sites, only two participate in the cleavage. Therefore, it should be considered as a dimer of dimers.

It catalyses the reaction pretRNA = a 3'-half-tRNA molecule with a 5'-OH end + a 5'-half-tRNA molecule with a 2',3'-cyclic phosphate end + an intron with a 2',3'-cyclic phosphate and a 5'-hydroxyl terminus.. Its function is as follows. Endonuclease that removes tRNA introns. Cleaves pre-tRNA at the 5'- and 3'-splice sites to release the intron. The products are an intron and two tRNA half-molecules bearing 2',3' cyclic phosphate and 5'-OH termini. Recognizes a pseudosymmetric substrate in which 2 bulged loops of 3 bases are separated by a stem of 4 bp. This chain is tRNA-splicing endonuclease, found in Saccharolobus islandicus (strain L.S.2.15 / Lassen #1) (Sulfolobus islandicus).